The chain runs to 347 residues: MSDRKQALDMALRQIEKQFGKGSIMKMGENEIPKIATIPSGSLALDVALGIGGYPRGRVVEIYGPESSGKTTVALHAIAEAQKQGGQAAFIDAEHALDPVYAKALGVNIDELLLSQPDTGEQALEIAEALVRSGAVDIIVVDSVAALVPKAEIEGEMGDSHVGLQARLMSQALRKLSGAINKSKTTAIFINQIREKVGVMFGNPETTPGGRALKFYSSVRLEVRRAETLKLGNDAVGNKARIKVVKNKVAPPFKQAEVDIMYGKGISKEGEVLDIGSDLDIVMKSGAWYSYNNDRLGQGRENAKQYLKEHEEVLTEIHQSIRQHYELDKVDEDKTEEEASQESLDLK.

64 to 71 (GPESSGKT) contributes to the ATP binding site. Positions 328 to 347 (DKVDEDKTEEEASQESLDLK) are disordered.

The protein belongs to the RecA family.

It is found in the cytoplasm. Its function is as follows. Can catalyze the hydrolysis of ATP in the presence of single-stranded DNA, the ATP-dependent uptake of single-stranded DNA by duplex DNA, and the ATP-dependent hybridization of homologous single-stranded DNAs. It interacts with LexA causing its activation and leading to its autocatalytic cleavage. This Oceanobacillus iheyensis (strain DSM 14371 / CIP 107618 / JCM 11309 / KCTC 3954 / HTE831) protein is Protein RecA.